The chain runs to 94 residues: Large ribosomal subunit protein uL23cz (94 aa).

Belongs to the universal ribosomal protein uL23 family. Part of the 50S ribosomal subunit.

It localises to the plastid. The protein localises to the chloroplast. Its function is as follows. Binds to 23S rRNA. In Agrostis stolonifera (Creeping bentgrass), this protein is Large ribosomal subunit protein uL23cz (rpl23-A).